The chain runs to 277 residues: uncharacterized protein (277 aa).

The protein belongs to the BtpA family.

Its subcellular location is the mitochondrion. This is an uncharacterized protein from Caenorhabditis elegans.